Reading from the N-terminus, the 648-residue chain is Biosynthetic arginine decarboxylase (648 aa).

N6-(pyridoxal phosphate)lysine is present on Lys109. 291 to 301 (IDVGGGLGIDF) contacts substrate.

Belongs to the Orn/Lys/Arg decarboxylase class-II family. SpeA subfamily. The cofactor is Mg(2+). Requires pyridoxal 5'-phosphate as cofactor.

The enzyme catalyses L-arginine + H(+) = agmatine + CO2. It participates in amine and polyamine biosynthesis; agmatine biosynthesis; agmatine from L-arginine: step 1/1. Catalyzes the biosynthesis of agmatine from arginine. The chain is Biosynthetic arginine decarboxylase from Prochlorococcus marinus (strain MIT 9312).